A 172-amino-acid polypeptide reads, in one-letter code: MKLGIVIFPSKMIQDKANGLRKRYDPHYALVPPHITLKTPFETQDEQLESIVNELHTIANKTNPFTLHVGKVGSFAPVNNVLYFKVEKTPELTFLNEEMHNGFFTQEREYSFVPHLTIGQDLSDAEHADVLGRLRMKDFYYEQPIDRFHLLYQLENGTWTVHETFHLGKENN.

Residue histidine 34 is the Proton donor of the active site. 2 consecutive short sequence motifs (HXTX) follow at residues 34 to 37 (HITL) and 115 to 118 (HLTI). Catalysis depends on histidine 115, which acts as the Proton acceptor.

This sequence belongs to the 2H phosphoesterase superfamily. YjcG family.

This chain is Putative phosphoesterase BcerKBAB4_1135, found in Bacillus mycoides (strain KBAB4) (Bacillus weihenstephanensis).